The primary structure comprises 1163 residues: Guanylate cyclase 32E (1163 aa).

The first 25 residues, 1 to 25 (MPGPCASAAAFSCILVLLLLGCQRS), serve as a signal peptide directing secretion. Topologically, residues 29–469 (AAGATVSSMR…LCPRKKLDWR (441 aa)) are extracellular. Asn147, Asn206, Asn368, and Asn390 each carry an N-linked (GlcNAc...) asparagine glycan. The helical transmembrane segment at 470 to 490 (YLVSGPLCALVVVVAIALLIK) threads the bilayer. The Cytoplasmic segment spans residues 491–1163 (HYRYEQTLAG…RSAPSITFRL (673 aa)). Residues 507-800 (MKDVTVINLG…IRLVRMHLKE (294 aa)) form the Protein kinase domain. A Guanylate cyclase domain is found at 873–1003 (TILFSDIVGF…DTVNTASRME (131 aa)).

This sequence belongs to the adenylyl cyclase class-4/guanylyl cyclase family.

Its subcellular location is the membrane. The enzyme catalyses GTP = 3',5'-cyclic GMP + diphosphate. The chain is Guanylate cyclase 32E (Gyc32E) from Drosophila melanogaster (Fruit fly).